Here is a 958-residue protein sequence, read N- to C-terminus: N-terminal acetyltransferase B complex subunit NAA25 homolog (958 aa).

TPR repeat units lie at residues 7–42, 78–111, and 320–353; these read AVLERRLRPIYDSLDSQQFKKALSDCDKVLKKHPNT, ELTLQAFVHCYRDSNQHMKVVTLYERIIQVDPSE, and FFAYKQIGKLTKQIPDMDDMTSIFGEQVDKMLEY.

Belongs to the MDM20/NAA25 family. Component of the N-terminal acetyltransferase B (NatB) complex. Interacts with acer-1. Expressed in germline and somatic cells.

Its subcellular location is the cytoplasm. The protein resides in the nucleus. It localises to the chromosome. In terms of biological role, non-catalytic subunit of the NatB complex which catalyzes acetylation of the N-terminal methionine residues of proteins beginning with Met-Asp or Met-Glu. Required for chromosome organization and arrangement; specifically for assembly of the central region components of the synaptonemal complex onto chromosomes during meiosis and for DNA double stranded break formation and repair. Acts downstream of xnd-1 to regulate levels of histone acetylation in germ and somatic cell nuclei by controlling acetyl-CoA production through antagonizing the acetyl-CoA hydrolase activity of acer-1. This chain is N-terminal acetyltransferase B complex subunit NAA25 homolog, found in Caenorhabditis elegans.